The chain runs to 126 residues: Protein HEAT-INDUCED TAS1 TARGET 3 (126 aa).

It belongs to the heat induced plant HTT protein family. As to expression, expressed in seedlings, leaves, stems, inflorescences and siliques.

The protein localises to the cytoplasm. The protein resides in the nucleus. Functionally, mediates both basal and acquired thermotolerance. This chain is Protein HEAT-INDUCED TAS1 TARGET 3, found in Arabidopsis thaliana (Mouse-ear cress).